The chain runs to 150 residues: Putative biopolymer transport protein ExbB-like 2 (150 aa).

A run of 3 helical transmembrane segments spans residues 5-25 (VDYG…AIAI), 63-83 (APYI…MDLG), and 97-117 (LALA…AIVI).

Belongs to the ExbB/TolQ family.

The protein resides in the cell inner membrane. The protein is Putative biopolymer transport protein ExbB-like 2 of Helicobacter pylori (strain J99 / ATCC 700824) (Campylobacter pylori J99).